The primary structure comprises 55 residues: Beta-toxin Cn7 (55 aa).

The region spanning Lys-1–Ala-55 is the LCN-type CS-alpha/beta domain. Disulfide bonds link Cys-16–Cys-41, Cys-25–Cys-46, and Cys-29–Cys-48.

It belongs to the long (3 C-C) scorpion toxin superfamily. Sodium channel inhibitor family. Beta subfamily. In terms of tissue distribution, expressed by the venom gland.

Its subcellular location is the secreted. Functionally, beta toxins bind voltage-independently at site-4 of sodium channels (Nav) and shift the voltage of activation toward more negative potentials thereby affecting sodium channel activation and promoting spontaneous and repetitive firing. This Centruroides noxius (Mexican scorpion) protein is Beta-toxin Cn7.